Here is an 848-residue protein sequence, read N- to C-terminus: Xylosyltransferase (848 aa).

Residues 1–14 (MSLHRTLRRFLRKW) are Cytoplasmic-facing. The chain crosses the membrane as a helical; Signal-anchor for type II membrane protein span at residues 15–35 (KALVYAVSFILLIQAFFTFQS). The Lumenal portion of the chain corresponds to 36-843 (SPNLMEEEHL…PKTELISVKP (808 aa)). 4 cysteine pairs are disulfide-bonded: C145–C173, C189–C427, C446–C459, and C448–C457. UDP-alpha-D-xylose is bound by residues V219, D247, and 276 to 278 (TIW). N306 is a glycosylation site (N-linked (GlcNAc...) asparagine). Residue 379–380 (DW) participates in UDP-alpha-D-xylose binding. Residues S460 and 482-483 (RK) contribute to the UDP-alpha-D-xylose site. 2 disulfides stabilise this stretch: C529-C811 and C794-C822. The N-linked (GlcNAc...) asparagine glycan is linked to N530. Positions 824–848 (NTNWSSLSPDPKTELISVKPDGRIR) are disordered. N826 carries N-linked (GlcNAc...) asparagine glycosylation.

This sequence belongs to the glycosyltransferase 14 family. XylT subfamily. A divalent metal cation serves as cofactor.

Its subcellular location is the endoplasmic reticulum membrane. It is found in the golgi apparatus membrane. It catalyses the reaction UDP-alpha-D-xylose + L-seryl-[protein] = 3-O-(beta-D-xylosyl)-L-seryl-[protein] + UDP + H(+). The protein operates within glycan metabolism; chondroitin sulfate biosynthesis. It participates in glycan metabolism; heparan sulfate biosynthesis. Catalyzes the first step in biosynthesis of glycosaminoglycan. Transfers D-xylose from UDP-D-xylose to specific serine residues of the core protein. Initial enzyme in the biosynthesis of chondroitin sulfate and dermatan sulfate proteoglycans in fibroblasts and chondrocytes. The polypeptide is Xylosyltransferase (xt) (Ciona intestinalis (Transparent sea squirt)).